Here is a 27-residue protein sequence, read N- to C-terminus: Conotoxin flf14a (27 aa).

2 disulfides stabilise this stretch: Cys-6-Cys-26 and Cys-10-Cys-22.

Expressed by the venom duct.

Its subcellular location is the secreted. The protein is Conotoxin flf14a of Conus anabathrum floridanus (Florida cone).